Consider the following 263-residue polypeptide: Endonuclease 8 (263 aa).

Catalysis depends on Pro2, which acts as the Schiff-base intermediate with DNA. Glu3 acts as the Proton donor in catalysis. The Proton donor; for beta-elimination activity role is filled by Lys53. Gln70, Arg125, and Asn169 together coordinate DNA. The FPG-type zinc finger occupies 229–263 (KVFHRDGERCERCGGIIEKTTLSSRPFYWCPGCQH). The Proton donor; for delta-elimination activity role is filled by Arg253.

This sequence belongs to the FPG family. The cofactor is Zn(2+).

The enzyme catalyses 2'-deoxyribonucleotide-(2'-deoxyribose 5'-phosphate)-2'-deoxyribonucleotide-DNA = a 3'-end 2'-deoxyribonucleotide-(2,3-dehydro-2,3-deoxyribose 5'-phosphate)-DNA + a 5'-end 5'-phospho-2'-deoxyribonucleoside-DNA + H(+). In terms of biological role, involved in base excision repair of DNA damaged by oxidation or by mutagenic agents. Acts as a DNA glycosylase that recognizes and removes damaged bases. Has a preference for oxidized pyrimidines, such as thymine glycol, 5,6-dihydrouracil and 5,6-dihydrothymine. Has AP (apurinic/apyrimidinic) lyase activity and introduces nicks in the DNA strand. Cleaves the DNA backbone by beta-delta elimination to generate a single-strand break at the site of the removed base with both 3'- and 5'-phosphates. In Klebsiella pneumoniae subsp. pneumoniae (strain ATCC 700721 / MGH 78578), this protein is Endonuclease 8.